The following is a 239-amino-acid chain: Fatty acid metabolism regulator protein (239 aa).

In terms of domain architecture, HTH gntR-type spans 6–74 (QSPAGFAEEY…HGKPTKVNNF (69 aa)). The segment at residues 34–53 (ERELSELIGVTRTTLREVLQ) is a DNA-binding region (H-T-H motif).

Homodimer.

The protein localises to the cytoplasm. Its function is as follows. Multifunctional regulator of fatty acid metabolism. This Yersinia enterocolitica serotype O:8 / biotype 1B (strain NCTC 13174 / 8081) protein is Fatty acid metabolism regulator protein.